Consider the following 52-residue polypeptide: Troponin C, skeletal muscle (52 aa).

2 consecutive EF-hand domains span residues 2 to 37 and 38 to 52; these read KSEEELAEFFRIFDKNADGYIDAEELAEIIRSSGEH and VTDEEIEELMKDGDK. Aspartate 15, asparagine 17, aspartate 19, tyrosine 21, and glutamate 26 together coordinate Ca(2+).

This sequence belongs to the troponin C family.

Functionally, troponin is the central regulatory protein of striated muscle contraction. Tn consists of three components: Tn-I which is the inhibitor of actomyosin ATPase, Tn-T which contains the binding site for tropomyosin and Tn-C. The binding of calcium to Tn-C abolishes the inhibitory action of Tn on actin filaments. This Protopterus dolloi (Slender lungfish) protein is Troponin C, skeletal muscle.